A 132-amino-acid polypeptide reads, in one-letter code: Large ribosomal subunit protein bL12 (132 aa).

Over residues alanine 102–glycine 126 the composition is skewed to basic and acidic residues. Residues alanine 102–lysine 132 form a disordered region.

It belongs to the bacterial ribosomal protein bL12 family. In terms of assembly, homodimer. Part of the ribosomal stalk of the 50S ribosomal subunit. Forms a multimeric L10(L12)X complex, where L10 forms an elongated spine to which 2 to 4 L12 dimers bind in a sequential fashion. Binds GTP-bound translation factors.

Forms part of the ribosomal stalk which helps the ribosome interact with GTP-bound translation factors. Is thus essential for accurate translation. The polypeptide is Large ribosomal subunit protein bL12 (Rippkaea orientalis (strain PCC 8801 / RF-1) (Cyanothece sp. (strain PCC 8801))).